Reading from the N-terminus, the 191-residue chain is Protein Ves (191 aa).

It belongs to the Ves family.

This Escherichia coli O139:H28 (strain E24377A / ETEC) protein is Protein Ves.